A 385-amino-acid chain; its full sequence is Leucine aminopeptidase 1 (385 aa).

A signal peptide spans methionine 1–alanine 20. Positions valine 21–valine 87 are excised as a propeptide. Residue asparagine 177 is glycosylated (N-linked (GlcNAc...) asparagine). Zn(2+) contacts are provided by histidine 185, aspartate 204, glutamate 243, and aspartate 270. Cysteine 319 and cysteine 323 are oxidised to a cystine. Histidine 352 provides a ligand contact to Zn(2+).

The protein belongs to the peptidase M28 family. M28E subfamily. Monomer. It depends on Zn(2+) as a cofactor.

The protein localises to the secreted. In terms of biological role, extracellular aminopeptidase that allows assimilation of proteinaceous substrates. This is Leucine aminopeptidase 1 (LAP1) from Ajellomyces capsulatus (strain NAm1 / WU24) (Darling's disease fungus).